Reading from the N-terminus, the 61-residue chain is Photosystem II reaction center protein K (61 aa).

Positions 1-24 (MLNIFSLICICINSALHSSSFFFA) are excised as a propeptide. A helical transmembrane segment spans residues 40-60 (MPVIPVLFFLLALVWQAAVSF).

It belongs to the PsbK family. In terms of assembly, PSII is composed of 1 copy each of membrane proteins PsbA, PsbB, PsbC, PsbD, PsbE, PsbF, PsbH, PsbI, PsbJ, PsbK, PsbL, PsbM, PsbT, PsbX, PsbY, PsbZ, Psb30/Ycf12, at least 3 peripheral proteins of the oxygen-evolving complex and a large number of cofactors. It forms dimeric complexes.

The protein resides in the plastid. Its subcellular location is the chloroplast thylakoid membrane. In terms of biological role, one of the components of the core complex of photosystem II (PSII). PSII is a light-driven water:plastoquinone oxidoreductase that uses light energy to abstract electrons from H(2)O, generating O(2) and a proton gradient subsequently used for ATP formation. It consists of a core antenna complex that captures photons, and an electron transfer chain that converts photonic excitation into a charge separation. The sequence is that of Photosystem II reaction center protein K from Liriodendron tulipifera (Tuliptree).